We begin with the raw amino-acid sequence, 287 residues long: Bifunctional protein FolD (287 aa).

NADP(+) contacts are provided by residues 166 to 168 (GAS) and I232.

It belongs to the tetrahydrofolate dehydrogenase/cyclohydrolase family. As to quaternary structure, homodimer.

The enzyme catalyses (6R)-5,10-methylene-5,6,7,8-tetrahydrofolate + NADP(+) = (6R)-5,10-methenyltetrahydrofolate + NADPH. It carries out the reaction (6R)-5,10-methenyltetrahydrofolate + H2O = (6R)-10-formyltetrahydrofolate + H(+). It participates in one-carbon metabolism; tetrahydrofolate interconversion. Catalyzes the oxidation of 5,10-methylenetetrahydrofolate to 5,10-methenyltetrahydrofolate and then the hydrolysis of 5,10-methenyltetrahydrofolate to 10-formyltetrahydrofolate. In Chromohalobacter salexigens (strain ATCC BAA-138 / DSM 3043 / CIP 106854 / NCIMB 13768 / 1H11), this protein is Bifunctional protein FolD.